The sequence spans 438 residues: 5-methylthioadenosine/S-adenosylhomocysteine deaminase (438 aa).

Zn(2+)-binding residues include His-71 and His-73. Residues Glu-100 and His-192 each coordinate substrate. Residue His-219 coordinates Zn(2+). Substrate is bound by residues Glu-222 and Asp-307. Asp-307 is a Zn(2+) binding site.

This sequence belongs to the metallo-dependent hydrolases superfamily. MTA/SAH deaminase family. Zn(2+) is required as a cofactor.

The catalysed reaction is S-adenosyl-L-homocysteine + H2O + H(+) = S-inosyl-L-homocysteine + NH4(+). It catalyses the reaction S-methyl-5'-thioadenosine + H2O + H(+) = S-methyl-5'-thioinosine + NH4(+). Functionally, catalyzes the deamination of 5-methylthioadenosine and S-adenosyl-L-homocysteine into 5-methylthioinosine and S-inosyl-L-homocysteine, respectively. Is also able to deaminate adenosine. The sequence is that of 5-methylthioadenosine/S-adenosylhomocysteine deaminase from Syntrophobacter fumaroxidans (strain DSM 10017 / MPOB).